The sequence spans 752 residues: Translation initiation factor IF-2 (752 aa).

The span at 148 to 159 (KKVKDKNKKEEP) shows a compositional bias: basic and acidic residues. Positions 148-170 (KKVKDKNKKEEPAVTPSTAPRKK) are disordered. Positions 250–419 (PRPPIVTVMG…ALQAEIMELK (170 aa)) constitute a tr-type G domain. A G1 region spans residues 259–266 (GHVDHGKT). Residue 259–266 (GHVDHGKT) coordinates GTP. The tract at residues 284–288 (GITQH) is G2. The segment at 305–308 (DTPG) is G3. GTP is bound by residues 305-309 (DTPGH) and 359-362 (NKID). The interval 359–362 (NKID) is G4. A G5 region spans residues 395-397 (SAK).

Belongs to the TRAFAC class translation factor GTPase superfamily. Classic translation factor GTPase family. IF-2 subfamily.

The protein resides in the cytoplasm. In terms of biological role, one of the essential components for the initiation of protein synthesis. Protects formylmethionyl-tRNA from spontaneous hydrolysis and promotes its binding to the 30S ribosomal subunits. Also involved in the hydrolysis of GTP during the formation of the 70S ribosomal complex. This is Translation initiation factor IF-2 from Thermodesulfovibrio yellowstonii (strain ATCC 51303 / DSM 11347 / YP87).